The chain runs to 180 residues: MKKERLEQAAAFGKERAKKKKNTDTTSNLVPVPKGAKKEKKRVGRGPGSKVGKTAGRGSKGQYARNTVRRGFEGGQMPIHRRLPKRGFTAKFHKEFYPVNLRDIEKSGLTGNIDAKIMVQSKILDKETTLFKILGTGEIKKAIHVIADGFSQSAKEKIEKAGGSIKLRAEIELAASETKK.

A disordered region spans residues 1-62 (MKKERLEQAA…KTAGRGSKGQ (62 aa)). A compositionally biased stretch (basic residues) spans 35-44 (GAKKEKKRVG).

The protein belongs to the universal ribosomal protein uL15 family. In terms of assembly, part of the 50S ribosomal subunit.

Its function is as follows. Binds to the 23S rRNA. The polypeptide is Large ribosomal subunit protein uL15 (Leptospira borgpetersenii serovar Hardjo-bovis (strain JB197)).